The primary structure comprises 177 residues: Ribosome maturation factor RimP (177 aa).

Belongs to the RimP family.

It is found in the cytoplasm. In terms of biological role, required for maturation of 30S ribosomal subunits. This is Ribosome maturation factor RimP from Methylibium petroleiphilum (strain ATCC BAA-1232 / LMG 22953 / PM1).